A 519-amino-acid chain; its full sequence is Sodium-dependent dicarboxylate transporter SdcS (519 aa).

The next 14 membrane-spanning stretches (helical) occupy residues 29 to 49 (VGQL…LLLF), 59 to 79 (VFVL…AIPI), 103 to 123 (AQYG…AIAM), 136 to 156 (IINT…IATG), 159 to 179 (SMFV…LAII), 201 to 221 (ALVL…LIGT), 241 to 261 (FAKW…LVWI), 297 to 317 (KVVL…EFLL), 322 to 342 (FTSE…LFLI), 362 to 382 (LPWG…GISE), 395 to 415 (LIEG…VLFL), 428 to 448 (ILPI…LLMV), 451 to 471 (AMAA…AIVF), and 490 to 510 (LLSI…VLGI).

This sequence belongs to the SLC13A/DASS transporter (TC 2.A.47) family. NADC subfamily.

Its subcellular location is the cell membrane. Its function is as follows. Mediates the transport of dicarboxylates across the cytoplasmic membrane via a Na(+)-electrochemical gradient. The sequence is that of Sodium-dependent dicarboxylate transporter SdcS (sdcS) from Staphylococcus saprophyticus subsp. saprophyticus (strain ATCC 15305 / DSM 20229 / NCIMB 8711 / NCTC 7292 / S-41).